The sequence spans 197 residues: dITP/XTP pyrophosphatase (197 aa).

8–13 contacts substrate; the sequence is TGNAGK. The Mg(2+) site is built by E40 and D69. D69 acts as the Proton acceptor in catalysis. Residues S70, 154-157, K177, and 182-183 contribute to the substrate site; these read FGYD and HR.

This sequence belongs to the HAM1 NTPase family. As to quaternary structure, homodimer. Mg(2+) serves as cofactor.

The enzyme catalyses XTP + H2O = XMP + diphosphate + H(+). It catalyses the reaction dITP + H2O = dIMP + diphosphate + H(+). It carries out the reaction ITP + H2O = IMP + diphosphate + H(+). Its function is as follows. Pyrophosphatase that catalyzes the hydrolysis of nucleoside triphosphates to their monophosphate derivatives, with a high preference for the non-canonical purine nucleotides XTP (xanthosine triphosphate), dITP (deoxyinosine triphosphate) and ITP. Seems to function as a house-cleaning enzyme that removes non-canonical purine nucleotides from the nucleotide pool, thus preventing their incorporation into DNA/RNA and avoiding chromosomal lesions. The polypeptide is dITP/XTP pyrophosphatase (rdgB) (Shigella flexneri).